The sequence spans 319 residues: HTH-type transcriptional regulator YidZ (319 aa).

The region spanning 8-65 (LDLNLLLCLQLLMQERSVTKAAKRMNVTPSAVSKSLAKLRAWFDDPLFVNSPLGLSPT) is the HTH lysR-type domain. A DNA-binding region (H-T-H motif) is located at residues 25 to 44 (VTKAAKRMNVTPSAVSKSLA).

It belongs to the LysR transcriptional regulatory family.

Functionally, involved in anaerobic NO protection. In Escherichia coli O139:H28 (strain E24377A / ETEC), this protein is HTH-type transcriptional regulator YidZ.